The chain runs to 359 residues: Molybdenum import ATP-binding protein ModC (359 aa).

The ABC transporter domain maps to methionine 1–glutamate 229. ATP is bound at residue glycine 31–threonine 38. Residues serine 289 to asparagine 354 form the Mop domain.

The protein belongs to the ABC transporter superfamily. Molybdate importer (TC 3.A.1.8) family. In terms of assembly, the complex is composed of two ATP-binding proteins (ModC), two transmembrane proteins (ModB) and a solute-binding protein (ModA).

Its subcellular location is the cell inner membrane. It catalyses the reaction molybdate(out) + ATP + H2O = molybdate(in) + ADP + phosphate + H(+). Part of the ABC transporter complex ModABC involved in molybdenum import. Responsible for energy coupling to the transport system. In Yersinia pestis bv. Antiqua (strain Antiqua), this protein is Molybdenum import ATP-binding protein ModC.